Here is a 352-residue protein sequence, read N- to C-terminus: Potassium/proton antiporter CemA (352 aa).

3 consecutive transmembrane segments (helical) span residues 52 to 72 (VLVS…IHFF), 227 to 247 (IAAL…IILF), and 312 to 332 (IILL…KYWI).

Belongs to the CemA family.

Its subcellular location is the plastid. It is found in the chloroplast inner membrane. It carries out the reaction K(+)(in) + H(+)(out) = K(+)(out) + H(+)(in). Functionally, contributes to K(+)/H(+) antiport activity by supporting proton efflux to control proton extrusion and homeostasis in chloroplasts in a light-dependent manner to modulate photosynthesis. Prevents excessive induction of non-photochemical quenching (NPQ) under continuous-light conditions. Indirectly promotes efficient inorganic carbon uptake into chloroplasts. The sequence is that of Potassium/proton antiporter CemA from Oltmannsiellopsis viridis (Marine flagellate).